The sequence spans 347 residues: NADH-quinone oxidoreductase subunit H (347 aa).

8 helical membrane passes run 13–33, 82–102, 115–135, 161–181, 198–218, 258–278, 286–306, and 321–341; these read LIMI…IAYI, AVFL…WAVV, VGIL…IMGG, IGLV…TDIV, FLDW…ISAL, AVVL…LPPV, VPGI…FAMV, and LGWK…AFVL.

Belongs to the complex I subunit 1 family. As to quaternary structure, NDH-1 is composed of 14 different subunits. Subunits NuoA, H, J, K, L, M, N constitute the membrane sector of the complex.

The protein resides in the cell inner membrane. It catalyses the reaction a quinone + NADH + 5 H(+)(in) = a quinol + NAD(+) + 4 H(+)(out). Functionally, NDH-1 shuttles electrons from NADH, via FMN and iron-sulfur (Fe-S) centers, to quinones in the respiratory chain. The immediate electron acceptor for the enzyme in this species is believed to be ubiquinone. Couples the redox reaction to proton translocation (for every two electrons transferred, four hydrogen ions are translocated across the cytoplasmic membrane), and thus conserves the redox energy in a proton gradient. This subunit may bind ubiquinone. The sequence is that of NADH-quinone oxidoreductase subunit H from Rhizobium rhizogenes (strain K84 / ATCC BAA-868) (Agrobacterium radiobacter).